Consider the following 274-residue polypeptide: Probable cyclic nucleotide phosphodiesterase RPA0124 (274 aa).

Fe cation contacts are provided by Asp-8, His-10, Asp-49, Asn-79, His-155, His-194, and His-196. AMP is bound by residues His-10, Asp-49, and 79-80 (NH). Position 196 (His-196) interacts with AMP.

It belongs to the cyclic nucleotide phosphodiesterase class-III family. The cofactor is Fe(2+).

The sequence is that of Probable cyclic nucleotide phosphodiesterase RPA0124 from Rhodopseudomonas palustris (strain ATCC BAA-98 / CGA009).